We begin with the raw amino-acid sequence, 842 residues long: Serine/threonine-protein kinase CLA4 (842 aa).

Positions 12–34 are disordered; that stretch reads DNDFQNIGPAPRPPSSNSQGRTC. Phosphoserine occurs at positions 29 and 46. The region spanning 61–179 is the PH domain; it reads SKKKSGWVSY…WLDAIFAKCP (119 aa). Positions 184 to 197 constitute a CRIB domain; the sequence is VSSPTNFTHKVHVG. The segment covering 247–274 has biased composition (polar residues); the sequence is GNPTNTLDKPQSGETSSSQKSLPNSYND. Residues 247-524 are disordered; that stretch reads GNPTNTLDKP…KPKKPARPTM (278 aa). Over residues 279-296 the composition is skewed to low complexity; the sequence is NNSVNSKSSSGVSSSMVS. The span at 297-307 shows a compositional bias: polar residues; the sequence is QRKTSQPPNTK. Residues 308 to 319 show a composition bias toward low complexity; the sequence is SPVSLGSGSLPP. Residues 323–343 show a composition bias toward polar residues; the sequence is KLPTSQSNIPRHLQNVPNQQY. Ser-351 and Ser-367 each carry phosphoserine. A compositionally biased stretch (low complexity) spans 372-387; that stretch reads QQQQQQQQQQKQQHQQ. A compositionally biased stretch (pro residues) spans 396–408; sequence SPSPSPSPSPLNP. Residues 418-435 are compositionally biased toward low complexity; it reads PYSKQPQSPLSSQSTQNQ. Ser-425 bears the Phosphoserine mark. 2 stretches are compositionally biased toward polar residues: residues 470–481 and 488–497; these read PSNQNATSNTHV and NDQSTPQTMR. In terms of domain architecture, Protein kinase spans 546-825; that stretch reads FKVIEKAGQG…TEELLHHGFF (280 aa). ATP-binding positions include 552-560 and Lys-594; that span reads AGQGASGSV. The Proton acceptor role is filled by Asp-693.

Belongs to the protein kinase superfamily. STE Ser/Thr protein kinase family. STE20 subfamily. In terms of assembly, interacts with CDC42.

It catalyses the reaction L-seryl-[protein] + ATP = O-phospho-L-seryl-[protein] + ADP + H(+). The enzyme catalyses L-threonyl-[protein] + ATP = O-phospho-L-threonyl-[protein] + ADP + H(+). Functionally, involved in budding and cytokinesis. The polypeptide is Serine/threonine-protein kinase CLA4 (CLA4) (Saccharomyces cerevisiae (strain ATCC 204508 / S288c) (Baker's yeast)).